Here is a 199-residue protein sequence, read N- to C-terminus: Small ribosomal subunit protein uS2 (199 aa).

It belongs to the universal ribosomal protein uS2 family.

In Thermoplasma volcanium (strain ATCC 51530 / DSM 4299 / JCM 9571 / NBRC 15438 / GSS1), this protein is Small ribosomal subunit protein uS2 (rps2).